A 121-amino-acid polypeptide reads, in one-letter code: Griffithsin (121 aa).

A Jacalin-type lectin domain is found at 1 to 120; that stretch reads SLTHRKFGGS…LDSLDIYYEQ (120 aa).

Its function is as follows. Mixed specificity lectin with anti-HIV activity. Binds to HIV envelope glycoproteins, including exterior membrane glycoprotein gp120, and inhibits viral entry into cells. Binding to gp120 is dependent on gp120 being glycosylated, and is inhibited by mannose, glucose and N-acetylglucosamine. The protein is Griffithsin of Griffithsia sp. (strain Q66D336) (Red alga).